The sequence spans 243 residues: MLIYLIPTAKEMSQNHTRFPATFPKKSYPILDVLANLSVKDLSKAYRISEDASQKEWLRIQALYNHTAPTYPAYKLFNGLMYRYLKRDSLSPKEEDYLKNHVYITSALYGIIPASFPIAEHRLDFQTKIKIGQQSLKHFWREDYNQFIDANQTYVSLLSSEFEDVFSTDQRQMWISTQFLEEKNGLLKSHSTISKKARGAFLTACIAKQCQSISDLKTLDFIGFSFSPELSTNHKFVYIKKEA.

The protein belongs to the UPF0246 family.

The chain is UPF0246 protein SUB1767 from Streptococcus uberis (strain ATCC BAA-854 / 0140J).